A 380-amino-acid chain; its full sequence is Transporter PPE51 (380 aa).

Met1 is modified (N-acetylmethionine).

The protein belongs to the mycobacterial PPE family. In terms of assembly, interacts with PE19 and PE25.

Its subcellular location is the cell outer membrane. Small molecule-selective channel required for the uptake of nutrients across the outer mycomembrane. Transports glycerol and glucose. Involved in sensitivity to M.tuberculosis growth inhibitory agrichemical 3,3-bis-di(methylsulfonyl)propionamide (3bMP1). Transports maltose and lactose disaccharides. Involved in sensitivity to bactericidal thio-disaccharide T-6 compound (1,6-anhydro-3-deoxy-4-S-(2,3,4,6-tetra-O-acetyl-beta-D-glucopyranosyl)-D-glycero-hexopyranos-2-ulose). Transports extracellular trehalose, a component of the cell envelope, and trehalose analog, 6-azido trehalose (6-TreAz), which has antimycobacterial activity. Its function is as follows. Plays a role in response to starvation and stress, likely environment within the host. Inhibits canonical autophagy in infected mouse RAW264.7 macrophages. Inhibits autophagy and enhances intracellular bacterial survival when expressed in human macrophage-like THP-1 cells. Inhibits Toll-like receptor 2 (TLR2)-dependent signaling leading to autophagy inhibition, increased intracellular bacterial survival, reduced phagocytosis and reduced secretion of interleukin 6 (IL-6) and IL-1 in infected mouse primary bone marrow-derived macrophage (BMDM) cells. Required for virulence and persistence in the lungs and spleens of intranasally infected C57BL/6J mice. Blocks the antibacterial effects of TLR2 activation, suppresses MHC class II-dependent antigen presentation, and reduces IFN-gamma and TNF-alpha-producing CD4(+) T cells during infection in C57BL/6J mice. The polypeptide is Transporter PPE51 (PPE51) (Mycobacterium tuberculosis (strain CDC 1551 / Oshkosh)).